The primary structure comprises 433 residues: uncharacterized protein (433 aa).

The protein belongs to the arrestin family.

This is an uncharacterized protein from Schizosaccharomyces pombe (strain 972 / ATCC 24843) (Fission yeast).